Consider the following 153-residue polypeptide: Endoribonuclease YbeY (153 aa).

Zn(2+)-binding residues include His116, His120, and His126.

Belongs to the endoribonuclease YbeY family. Zn(2+) is required as a cofactor.

It localises to the cytoplasm. In terms of biological role, single strand-specific metallo-endoribonuclease involved in late-stage 70S ribosome quality control and in maturation of the 3' terminus of the 16S rRNA. This is Endoribonuclease YbeY from Paraburkholderia phymatum (strain DSM 17167 / CIP 108236 / LMG 21445 / STM815) (Burkholderia phymatum).